The following is a 141-amino-acid chain: Putative pre-16S rRNA nuclease (141 aa).

Belongs to the YqgF nuclease family.

It localises to the cytoplasm. In terms of biological role, could be a nuclease involved in processing of the 5'-end of pre-16S rRNA. This chain is Putative pre-16S rRNA nuclease, found in Shewanella oneidensis (strain ATCC 700550 / JCM 31522 / CIP 106686 / LMG 19005 / NCIMB 14063 / MR-1).